A 124-amino-acid polypeptide reads, in one-letter code: MSVPTDRSYTAEHEWVLVDGSVATVGITEFAAEALGDVVFVQLPDVGAQLTAGEACGEIESTKSVSDLFAPVTGSVIEVNSAIDAGPETVNSDPYGAGWLFRVEIATAGELLDAAAYAALTSGE.

Residues 22 to 104 (VATVGITEFA…YGAGWLFRVE (83 aa)) enclose the Lipoyl-binding domain. Lys-63 is modified (N6-lipoyllysine).

This sequence belongs to the GcvH family. In terms of assembly, the glycine cleavage system is composed of four proteins: P, T, L and H. (R)-lipoate is required as a cofactor.

Functionally, the glycine cleavage system catalyzes the degradation of glycine. The H protein shuttles the methylamine group of glycine from the P protein to the T protein. The polypeptide is Glycine cleavage system H protein (Beutenbergia cavernae (strain ATCC BAA-8 / DSM 12333 / CCUG 43141 / JCM 11478 / NBRC 16432 / NCIMB 13614 / HKI 0122)).